Consider the following 311-residue polypeptide: Methionyl-tRNA formyltransferase (311 aa).

Residue 112 to 115 (SLLP) coordinates (6S)-5,6,7,8-tetrahydrofolate.

Belongs to the Fmt family.

It catalyses the reaction L-methionyl-tRNA(fMet) + (6R)-10-formyltetrahydrofolate = N-formyl-L-methionyl-tRNA(fMet) + (6S)-5,6,7,8-tetrahydrofolate + H(+). In terms of biological role, attaches a formyl group to the free amino group of methionyl-tRNA(fMet). The formyl group appears to play a dual role in the initiator identity of N-formylmethionyl-tRNA by promoting its recognition by IF2 and preventing the misappropriation of this tRNA by the elongation apparatus. The polypeptide is Methionyl-tRNA formyltransferase (Rhizobium etli (strain ATCC 51251 / DSM 11541 / JCM 21823 / NBRC 15573 / CFN 42)).